The chain runs to 146 residues: Small ribosomal subunit protein uS13A (146 aa).

Ser2 bears the N-acetylserine mark. Lys36 is covalently cross-linked (Glycyl lysine isopeptide (Lys-Gly) (interchain with G-Cter in ubiquitin)). An N6-methyllysine; by RKM1 modification is found at Lys48. Residues Lys49, Lys80, and Lys96 each participate in a glycyl lysine isopeptide (Lys-Gly) (interchain with G-Cter in ubiquitin) cross-link.

This sequence belongs to the universal ribosomal protein uS13 family. As to quaternary structure, component of the small ribosomal subunit (SSU). Mature yeast ribosomes consist of a small (40S) and a large (60S) subunit. The 40S small subunit contains 1 molecule of ribosomal RNA (18S rRNA) and 33 different proteins (encoded by 57 genes). The large 60S subunit contains 3 rRNA molecules (25S, 5.8S and 5S rRNA) and 46 different proteins (encoded by 81 genes). N-terminally acetylated by acetyltransferase NatA.

The protein localises to the cytoplasm. Its function is as follows. Component of the ribosome, a large ribonucleoprotein complex responsible for the synthesis of proteins in the cell. The small ribosomal subunit (SSU) binds messenger RNAs (mRNAs) and translates the encoded message by selecting cognate aminoacyl-transfer RNA (tRNA) molecules. The large subunit (LSU) contains the ribosomal catalytic site termed the peptidyl transferase center (PTC), which catalyzes the formation of peptide bonds, thereby polymerizing the amino acids delivered by tRNAs into a polypeptide chain. The nascent polypeptides leave the ribosome through a tunnel in the LSU and interact with protein factors that function in enzymatic processing, targeting, and the membrane insertion of nascent chains at the exit of the ribosomal tunnel. The protein is Small ribosomal subunit protein uS13A of Saccharomyces cerevisiae (strain ATCC 204508 / S288c) (Baker's yeast).